Consider the following 222-residue polypeptide: Large ribosomal subunit protein uL4 (222 aa).

The segment at 50-72 (TRGRSEVSHSTKKPFRQKGTGNA) is disordered.

Belongs to the universal ribosomal protein uL4 family. As to quaternary structure, part of the 50S ribosomal subunit.

In terms of biological role, one of the primary rRNA binding proteins, this protein initially binds near the 5'-end of the 23S rRNA. It is important during the early stages of 50S assembly. It makes multiple contacts with different domains of the 23S rRNA in the assembled 50S subunit and ribosome. Its function is as follows. Forms part of the polypeptide exit tunnel. The protein is Large ribosomal subunit protein uL4 of Chlamydia trachomatis serovar A (strain ATCC VR-571B / DSM 19440 / HAR-13).